Here is a 359-residue protein sequence, read N- to C-terminus: S-adenosylmethionine:tRNA ribosyltransferase-isomerase (359 aa).

It belongs to the QueA family. Monomer.

Its subcellular location is the cytoplasm. The catalysed reaction is 7-aminomethyl-7-carbaguanosine(34) in tRNA + S-adenosyl-L-methionine = epoxyqueuosine(34) in tRNA + adenine + L-methionine + 2 H(+). It participates in tRNA modification; tRNA-queuosine biosynthesis. Transfers and isomerizes the ribose moiety from AdoMet to the 7-aminomethyl group of 7-deazaguanine (preQ1-tRNA) to give epoxyqueuosine (oQ-tRNA). The sequence is that of S-adenosylmethionine:tRNA ribosyltransferase-isomerase from Ralstonia pickettii (strain 12J).